The chain runs to 481 residues: Tripartite motif-containing protein 10 (481 aa).

The RING-type zinc finger occupies 16–61; sequence CPICQGTLREPVTIDCGHNFCRACLTRYCEIPGPDLEESPTCPLCK. Residues 94–135 form a B box-type zinc finger; it reads GEEDVCQEHGEKIYFFCEDDEMQLCVVCREAGEHATHTMRFL. Residues Cys-99, His-102, Cys-121, and His-127 each coordinate Zn(2+). The stretch at 150–177 forms a coiled coil; sequence LKCLRKEREEIQEIQSRENKRMQVLLTQ. Residues 292 to 481 form the B30.2/SPRY domain; that stretch reads REMKMFLEKL…GRGSSFSLSS (190 aa).

Belongs to the TRIM/RBCC family. Interacts with IFNAR1; this interaction prevents association of IFNAR1 with TYK2.

Its subcellular location is the cytoplasm. In terms of biological role, E3 ligase that plays an essential role in the differentiation and survival of terminal erythroid cells. May directly bind to PTEN and promote its ubiquitination, resulting in its proteasomal degradation and activation of hypertrophic signaling. In addition, plays a role in immune response regulation by repressing the phosphorylation of STAT1 and STAT2 in the interferon/JAK/STAT signaling pathway independent of its E3 ligase activity. Mechanistically, interacts with the intracellular domain of IFNAR1 and thereby inhibits the association between TYK2 and IFNAR1. This chain is Tripartite motif-containing protein 10 (TRIM10), found in Homo sapiens (Human).